The primary structure comprises 800 residues: Putative antiporter subunit mnhA2 (800 aa).

The next 20 helical transmembrane spans lie at 1–21 (MSLV…LLMS), 33–53 (IALV…PSVA), 78–98 (GLSL…FFYA), 118–138 (LFMF…MYIF), 167–187 (FMIT…LYIM), 207–227 (GLFI…SAQF), 241–261 (TPVS…FLLL), 273–293 (YIYI…ITAL), 300–320 (GILA…VGIG), 331–351 (IASI…NHAI), 387–407 (LVMT…GFLS), 424–444 (FSLI…IFTF), 472–492 (PWLF…IFFV), 527–547 (GFNI…VLAI), 595–615 (IIMT…RIGL), 627–647 (GALE…LIFI), 651–671 (LTMV…FIAM), 676–696 (LALT…VSFS), 712–732 (IIKI…IFIT), and 768–788 (LDTL…YTLL).

It belongs to the CPA3 antiporters (TC 2.A.63) subunit A family. As to quaternary structure, may form a heterooligomeric complex that consists of seven subunits: mnhA2, mnhB2, mnhC2, mnhD2, mnhE2, mnhF2 and mnhG2.

It is found in the cell membrane. This chain is Putative antiporter subunit mnhA2 (mnhA2), found in Staphylococcus aureus (strain Mu3 / ATCC 700698).